The chain runs to 2464 residues: Highly reducing polyketide synthase xilA (2464 aa).

Residues 9 to 437 (HDPIALVGIG…GTNGHCIIDH (429 aa)) form the Ketosynthase family 3 (KS3) domain. Active-site for beta-ketoacyl synthase activity residues include cysteine 182, histidine 318, and histidine 360. A compositionally biased stretch (low complexity) spans 461 to 487 (QNGINGTNGTNGTNGTNGTNGTNGTNG). The segment at 461-495 (QNGINGTNGTNGTNGTNGTNGTNGTNGHHNPKTEA) is disordered. The region spanning 589 to 911 (FIFTGQGAQW…LKRNEDAQRL (323 aa)) is the Malonyl-CoA:ACP transacylase (MAT) domain. Positions 983–1121 (HDLLGSKVPG…GQIKIEVSTF (139 aa)) are N-terminal hotdog fold. The 304-residue stretch at 983–1286 (HDLLGSKVPG…FTSLNNEQES (304 aa)) folds into the PKS/mFAS DH domain. The Proton acceptor; for dehydratase activity role is filled by histidine 1015. The tract at residues 1133 to 1286 (GRLVDAQTWY…FTSLNNEQES (154 aa)) is C-terminal hotdog fold. Aspartate 1199 acts as the Proton donor; for dehydratase activity in catalysis. Residues 1282 to 1490 (NEQESTSTGD…TEPAHHSTIT (209 aa)) form a methyltransferase (CMeT) domain region. An Enoyl reductase (ER) domain is found at 1716-2028 (GILTSLYFKP…KGTHIGKMVI (313 aa)). Residues 2052 to 2231 (ANYILVGGMS…ATTVSLGFIN (180 aa)) enclose the Ketoreductase (KR) domain. Residues 2383–2461 (ETVTFVTDAI…SIAQVIVEEA (79 aa)) enclose the Carrier domain. Serine 2420 carries the O-(pantetheine 4'-phosphoryl)serine modification.

Requires pantetheine 4'-phosphate as cofactor.

Its pathway is secondary metabolite biosynthesis. Functionally, highly reducing polyketide synthase; part of the gene cluster that mediates the biosynthesis of the 6-methyl-2-pyrone derivative xylariolide D. XilA produces the 5-alkyl-6-methyl-2-pyrone backbone called prexylariolide D via sequential condensations of 4 malonyl-CoA units with one acetyl-CoA starter unit. During the biosynthesis, the linear polyketide chain is branched by the addition of an acetyl unit as the origin of the methyl group at the 2-pyrone ring. Prexylariolide D is then hydroxylated at the side chain by xilC to form the final product, xylariolide D. In Penicillium rubens (strain ATCC 28089 / DSM 1075 / NRRL 1951 / Wisconsin 54-1255) (Penicillium chrysogenum), this protein is Highly reducing polyketide synthase xilA.